The following is a 324-amino-acid chain: Geranylgeranyl diphosphate synthase (324 aa).

Positions 46, 49, and 78 each coordinate isopentenyl diphosphate. 2 residues coordinate Mg(2+): D85 and D89. R94 lines the an all-trans-polyprenyl diphosphate pocket. R95 is an isopentenyl diphosphate binding site. An all-trans-polyprenyl diphosphate-binding residues include K176, T177, Q214, K231, and K241.

It belongs to the FPP/GGPP synthase family. Requires Mg(2+) as cofactor.

The catalysed reaction is isopentenyl diphosphate + (2E,6E)-farnesyl diphosphate = (2E,6E,10E)-geranylgeranyl diphosphate + diphosphate. It functions in the pathway isoprenoid biosynthesis; geranylgeranyl diphosphate biosynthesis; geranylgeranyl diphosphate from farnesyl diphosphate and isopentenyl diphosphate: step 1/1. Catalyzes the sequential condensation of isopentenyl pyrophosphate with the allylic pyrophosphates to yield geranylgeranyl diphosphate (GGPP) which is a precursor of the ether-linked lipids. The chain is Geranylgeranyl diphosphate synthase from Methanosarcina mazei (strain ATCC BAA-159 / DSM 3647 / Goe1 / Go1 / JCM 11833 / OCM 88) (Methanosarcina frisia).